A 64-amino-acid polypeptide reads, in one-letter code: Large ribosomal subunit protein bL33c (64 aa).

It belongs to the bacterial ribosomal protein bL33 family.

The protein localises to the plastid. It is found in the chloroplast. The polypeptide is Large ribosomal subunit protein bL33c (rpl33) (Mesostigma viride (Green alga)).